A 224-amino-acid polypeptide reads, in one-letter code: MSFAASLYEKAQPIWEAGYNHPFVQGIGDGSLEKSKFQFFMKQDYLYLIDYARLFALGTLKGNDLQTMSTFSKLLHATLNVEMDLHRAYAKRLGISAEELEAIEPAATTLAYTSYMLNVAQRGSLLDLIAAVLPCTWSYYEIGVKLKGIPGASDHPFYGEWIKLYASDEFKELADWLIQMLDEEAKGLSSKEKAKLETIFLTTSRLENEFWDMAYNERMWNYNG.

Residue Asp44 participates in substrate binding. Residue Cys135 is the Nucleophile of the active site. Substrate contacts are provided by Tyr139 and Tyr165. Residue Glu207 is the Proton donor of the active site.

It belongs to the TenA family. In terms of assembly, homotetramer.

The catalysed reaction is 4-amino-5-aminomethyl-2-methylpyrimidine + H2O = 4-amino-5-hydroxymethyl-2-methylpyrimidine + NH4(+). The enzyme catalyses thiamine + H2O = 5-(2-hydroxyethyl)-4-methylthiazole + 4-amino-5-hydroxymethyl-2-methylpyrimidine + H(+). Its pathway is cofactor biosynthesis; thiamine diphosphate biosynthesis. Catalyzes an amino-pyrimidine hydrolysis reaction at the C5' of the pyrimidine moiety of thiamine compounds, a reaction that is part of a thiamine salvage pathway. Thus, catalyzes the conversion of 4-amino-5-aminomethyl-2-methylpyrimidine to 4-amino-5-hydroxymethyl-2-methylpyrimidine (HMP). To a lesser extent, is also able to catalyze the hydrolytic cleavage of thiamine; however, this thiaminase activity is unlikely to be physiologically relevant. Therefore, is involved in the regeneration of the thiamine pyrimidine from thiamine degraded products present in the environment, rather than in thiamine degradation. The sequence is that of Aminopyrimidine aminohydrolase from Halalkalibacterium halodurans (strain ATCC BAA-125 / DSM 18197 / FERM 7344 / JCM 9153 / C-125) (Bacillus halodurans).